Reading from the N-terminus, the 235-residue chain is MPSARDILQQGLDRLGSPEDLASRIDSTLLSPRATEEDVRNLVREASDYGFRCAVLTPVYTVKISGLAEKLGVKLCSVIGFPLGQAPLEVKLVEAQTVLEAGATELDVVPHLSLGPEAVYREVSGIVKLAKSYGAVVKVILEAPLWDDKTLSLLVDSSRRAGADIVKTSTGVYTKGGDPVTVFRLASLAKPLGMGVKASGGIRSGIDAVLAVGAGADIIGTSSAVKVLESFKSLV.

Catalysis depends on D107, which acts as the Proton donor/acceptor. K167 acts as the Schiff-base intermediate with acetaldehyde in catalysis. K197 acts as the Proton donor/acceptor in catalysis.

This sequence belongs to the DeoC/FbaB aldolase family. DeoC type 1 subfamily. In terms of assembly, homotetramer.

It is found in the cytoplasm. It carries out the reaction 2-deoxy-D-ribose 5-phosphate = D-glyceraldehyde 3-phosphate + acetaldehyde. It participates in carbohydrate degradation; 2-deoxy-D-ribose 1-phosphate degradation; D-glyceraldehyde 3-phosphate and acetaldehyde from 2-deoxy-alpha-D-ribose 1-phosphate: step 2/2. In terms of biological role, catalyzes a reversible aldol reaction between acetaldehyde and D-glyceraldehyde 3-phosphate to generate 2-deoxy-D-ribose 5-phosphate. This is Deoxyribose-phosphate aldolase from Aeropyrum pernix (strain ATCC 700893 / DSM 11879 / JCM 9820 / NBRC 100138 / K1).